Here is a 355-residue protein sequence, read N- to C-terminus: 3-isopropylmalate dehydrogenase (355 aa).

Substrate-binding residues include Arg98, Arg108, Arg132, and Asp223. Asp223, Asp247, and Asp251 together coordinate Mg(2+). 283 to 295 (GSAPDIAGQQKAD) serves as a coordination point for NAD(+).

Belongs to the isocitrate and isopropylmalate dehydrogenases family. LeuB type 2 subfamily. As to quaternary structure, homodimer. Mg(2+) serves as cofactor. Requires Mn(2+) as cofactor.

The protein localises to the cytoplasm. The catalysed reaction is (2R,3S)-3-isopropylmalate + NAD(+) = 4-methyl-2-oxopentanoate + CO2 + NADH. It functions in the pathway amino-acid biosynthesis; L-leucine biosynthesis; L-leucine from 3-methyl-2-oxobutanoate: step 3/4. Catalyzes the oxidation of 3-carboxy-2-hydroxy-4-methylpentanoate (3-isopropylmalate) to 3-carboxy-4-methyl-2-oxopentanoate. The product decarboxylates to 4-methyl-2 oxopentanoate. In Clavibacter michiganensis subsp. michiganensis (strain NCPPB 382), this protein is 3-isopropylmalate dehydrogenase.